Consider the following 38-residue polypeptide: Potassium channel toxin alpha-KTx 2.15 (38 aa).

Cystine bridges form between Cys-7–Cys-29, Cys-13–Cys-34, and Cys-17–Cys-36.

Belongs to the short scorpion toxin superfamily. Potassium channel inhibitor family. Alpha-KTx 02 subfamily. In terms of tissue distribution, expressed by the venom gland.

It is found in the secreted. Blocks human voltage-gated potassium channels Kv1.2/KCNA2 (IC(50)=0.3 nM), Kv1.3/KCNA3 (IC(50)=8.3 nM) and Shaker IR (with inactivation domain removed) (IC(50)=12 nM) and blocks intermediate conductance calcium-activated potassium channel KCa3.1/KCNN4 (IC(50)=6.4 nM). The protein is Potassium channel toxin alpha-KTx 2.15 of Centruroides tecomanus (Scorpion).